Consider the following 222-residue polypeptide: Probable pyridoxal 5'-phosphate synthase subunit SNO3 (222 aa).

58–60 contacts L-glutamine; sequence GES. The active-site Nucleophile is the Cys91. L-glutamine is bound by residues Arg120 and 151 to 152; that span reads IR. Residues His197 and Glu199 each act as charge relay system in the active site.

It belongs to the glutaminase PdxT/SNO family.

It catalyses the reaction aldehydo-D-ribose 5-phosphate + D-glyceraldehyde 3-phosphate + L-glutamine = pyridoxal 5'-phosphate + L-glutamate + phosphate + 3 H2O + H(+). The catalysed reaction is L-glutamine + H2O = L-glutamate + NH4(+). Its pathway is cofactor biosynthesis; pyridoxal 5'-phosphate biosynthesis. Its function is as follows. Catalyzes the hydrolysis of glutamine to glutamate and ammonia as part of the biosynthesis of pyridoxal 5'-phosphate. The resulting ammonia molecule is channeled to the active site of a SNZ isoform. This Saccharomyces cerevisiae (strain ATCC 204508 / S288c) (Baker's yeast) protein is Probable pyridoxal 5'-phosphate synthase subunit SNO3 (SNO3).